The chain runs to 616 residues: Dihydroxy-acid dehydratase (616 aa).

Mg(2+) is bound at residue D81. C122 is a binding site for [2Fe-2S] cluster. Residues D123 and K124 each coordinate Mg(2+). K124 is modified (N6-carboxylysine). C195 contributes to the [2Fe-2S] cluster binding site. E491 contacts Mg(2+). S517 serves as the catalytic Proton acceptor.

The protein belongs to the IlvD/Edd family. In terms of assembly, homodimer. Requires [2Fe-2S] cluster as cofactor. It depends on Mg(2+) as a cofactor.

It carries out the reaction (2R)-2,3-dihydroxy-3-methylbutanoate = 3-methyl-2-oxobutanoate + H2O. The catalysed reaction is (2R,3R)-2,3-dihydroxy-3-methylpentanoate = (S)-3-methyl-2-oxopentanoate + H2O. It participates in amino-acid biosynthesis; L-isoleucine biosynthesis; L-isoleucine from 2-oxobutanoate: step 3/4. It functions in the pathway amino-acid biosynthesis; L-valine biosynthesis; L-valine from pyruvate: step 3/4. Functionally, functions in the biosynthesis of branched-chain amino acids. Catalyzes the dehydration of (2R,3R)-2,3-dihydroxy-3-methylpentanoate (2,3-dihydroxy-3-methylvalerate) into 2-oxo-3-methylpentanoate (2-oxo-3-methylvalerate) and of (2R)-2,3-dihydroxy-3-methylbutanoate (2,3-dihydroxyisovalerate) into 2-oxo-3-methylbutanoate (2-oxoisovalerate), the penultimate precursor to L-isoleucine and L-valine, respectively. The protein is Dihydroxy-acid dehydratase of Salmonella dublin (strain CT_02021853).